Consider the following 278-residue polypeptide: Glutamate racemase (278 aa).

Substrate contacts are provided by residues 13-14 (DS) and 45-46 (YG). The active-site Proton donor/acceptor is the C76. 77-78 (NT) lines the substrate pocket. Residue C185 is the Proton donor/acceptor of the active site. Position 186-187 (186-187 (TH)) interacts with substrate.

This sequence belongs to the aspartate/glutamate racemases family.

It catalyses the reaction L-glutamate = D-glutamate. It functions in the pathway cell wall biogenesis; peptidoglycan biosynthesis. Its function is as follows. Provides the (R)-glutamate required for cell wall biosynthesis. The protein is Glutamate racemase of Gloeothece citriformis (strain PCC 7424) (Cyanothece sp. (strain PCC 7424)).